Reading from the N-terminus, the 144-residue chain is uncharacterized protein (144 aa).

This is an uncharacterized protein from Saccharomyces cerevisiae (strain ATCC 204508 / S288c) (Baker's yeast).